Reading from the N-terminus, the 1174-residue chain is DNA-directed RNA polymerase subunit beta' (1174 aa).

Residues Cys60, Cys62, Cys75, and Cys78 each contribute to the Zn(2+) site. Asp450, Asp452, and Asp454 together coordinate Mg(2+). Zn(2+) is bound by residues Cys795, Cys869, Cys876, and Cys879.

This sequence belongs to the RNA polymerase beta' chain family. The RNAP catalytic core consists of 2 alpha, 1 beta, 1 beta' and 1 omega subunit. When a sigma factor is associated with the core the holoenzyme is formed, which can initiate transcription. The cofactor is Mg(2+). Requires Zn(2+) as cofactor.

It carries out the reaction RNA(n) + a ribonucleoside 5'-triphosphate = RNA(n+1) + diphosphate. In terms of biological role, DNA-dependent RNA polymerase catalyzes the transcription of DNA into RNA using the four ribonucleoside triphosphates as substrates. In Clostridium kluyveri (strain ATCC 8527 / DSM 555 / NBRC 12016 / NCIMB 10680 / K1), this protein is DNA-directed RNA polymerase subunit beta'.